Here is a 178-residue protein sequence, read N- to C-terminus: uncharacterized protein (178 aa).

The segment covering 1–16 (MNKRTSVDASKEDLHP) has biased composition (basic and acidic residues). Residues 1 to 43 (MNKRTSVDASKEDLHPADPQSGEGVPPNRKNTKTSPRGEGTAP) are disordered.

This is an uncharacterized protein from Homo sapiens (Human).